The sequence spans 1166 residues: Serine-aspartate repeat-containing protein E (1166 aa).

Positions 1 to 52 (MINRDNKKAITKKGMISNRLNKFSIRKYTVGTASILVGTTLIFGLGNQEAKA) are cleaved as a signal peptide. The short motif at 23-34 (FSIRKYTVGTAS) is the YSIRK-G/S signaling motif element. Residues 53–606 (AENTSTENAK…GDGTVKPEEK (554 aa)) are ligand binding A region. Residues 54 to 230 (ENTSTENAKQ…SKEELKNNPE (177 aa)) are disordered. Positions 61–75 (AKQDDATTSDNKEVV) are enriched in basic and acidic residues. Positions 77 to 90 (ETENNSTTENNSTN) are enriched in low complexity. Positions 92–108 (IKKETNTDSQPEAKKES) are enriched in basic and acidic residues. Residues 118 to 129 (NNVTATTETKPQ) show a composition bias toward polar residues. The span at 130-145 (NIEKENVKPSTDKTAT) shows a compositional bias: basic and acidic residues. The segment covering 166–178 (TTKPSTSEPSTSE) has biased composition (low complexity). Positions 179–212 (IQTKPTTPQESTNIENSQPQPTPSKVDNQVTDAT) are enriched in polar residues. A compositionally biased stretch (basic and acidic residues) spans 221 to 230 (SKEELKNNPE). CNA-B domains lie at 607–719 (LYKI…YKEP), 720–829 (KYNL…YKTP), and 830–940 (KYSL…EEDT). Positions 904–1141 (VTNTTEDDKD…TGSENNGSNN (238 aa)) are disordered. 2 stretches are compositionally biased toward acidic residues: residues 908–918 (TEDDKDADGGE) and 935–1105 (YFEE…DSDS). The short motif at 1129–1133 (LPETG) is the LPXTG sorting signal element. Thr1132 carries the post-translational modification Pentaglycyl murein peptidoglycan amidated threonine. Positions 1133–1166 (GSENNGSNNATLFGGLFAALGSLLLFGRRKKQNK) are cleaved as a propeptide — removed by sortase.

The protein belongs to the serine-aspartate repeat-containing protein (SDr) family. In terms of assembly, interacts with host complement factor H/CFAH (via C-terminus). Interacts with host complement regulator C4BPA.

It localises to the secreted. The protein localises to the cell wall. Cell surface-associated calcium-binding protein which plays an important role in adhesion and pathogenesis. Contributes to the resistance to killing by innate immune components in blood and thus attenuates bacterial clearance by interacting with host complement factor H/CFAH and modulating its activity. Inhibits also bacterial opsonization and killing by interacting with host complement regulator C4BPA and thus inhibiting classical complement pathway activation. This Staphylococcus aureus (strain Newman) protein is Serine-aspartate repeat-containing protein E (sdrE).